We begin with the raw amino-acid sequence, 264 residues long: Proteasome subunit beta type-4 (264 aa).

Position 1 is an N-acetylmethionine (M1). Positions 1-45 (MEAFLGSRSGLWAGGPAPGQFYRIPSTPDSFMDPASALYRGPITR) are excised as a propeptide. S26 is subject to Phosphoserine. At Y102 the chain carries Phosphotyrosine.

Belongs to the peptidase T1B family. As to quaternary structure, the 26S proteasome consists of a 20S proteasome core and two 19S regulatory subunits. The 20S proteasome core is a barrel-shaped complex made of 28 subunits that are arranged in four stacked rings. The two outer rings are each formed by seven alpha subunits, and the two inner rings are formed by seven beta subunits. The proteolytic activity is exerted by three beta-subunits PSMB5, PSMB6 and PSMB7. Forms a ternary complex with SMAD1 and OAZ1 before PSMB4 is incorporated into the 20S proteasome. Interacts with PRPF19. In terms of assembly, (Microbial infection) Interacts with HTLV-1 Tax protein. (Microbial infection) Interacts with HIV-1 Nef and Tat proteins.

It localises to the cytoplasm. The protein resides in the nucleus. Its function is as follows. Non-catalytic component of the 20S core proteasome complex involved in the proteolytic degradation of most intracellular proteins. This complex plays numerous essential roles within the cell by associating with different regulatory particles. Associated with two 19S regulatory particles, forms the 26S proteasome and thus participates in the ATP-dependent degradation of ubiquitinated proteins. The 26S proteasome plays a key role in the maintenance of protein homeostasis by removing misfolded or damaged proteins that could impair cellular functions, and by removing proteins whose functions are no longer required. Associated with the PA200 or PA28, the 20S proteasome mediates ubiquitin-independent protein degradation. This type of proteolysis is required in several pathways including spermatogenesis (20S-PA200 complex) or generation of a subset of MHC class I-presented antigenic peptides (20S-PA28 complex). SMAD1/OAZ1/PSMB4 complex mediates the degradation of the CREBBP/EP300 repressor SNIP1. In Homo sapiens (Human), this protein is Proteasome subunit beta type-4.